Consider the following 757-residue polypeptide: RNA-directed RNA polymerase catalytic subunit (757 aa).

The segment at 50–81 is disordered; it reads SEKGKWTTNTETGAPQLNPIDGPLPEDNEPSG. Polar residues predominate over residues 55 to 64; that stretch reads WTTNTETGAP. 2 consecutive short sequence motifs (nuclear localization signal) follow at residues 187–195 and 203–216; these read RKRRVRDNM and RTIG…NKRS. Residues 249 to 256 are promoter-binding site; the sequence is RGFVYFVE. The 198-residue stretch at 286–483 folds into the RdRp catalytic domain; it reads VRKMMTNSQD…GINMSKKKSY (198 aa).

It belongs to the influenza viruses polymerase PB1 family. As to quaternary structure, influenza RNA polymerase is composed of three subunits: PB1, PB2 and PA. Interacts (via N-terminus) with PA (via C-terminus). Interacts (via C-terminus) with PB2 (via N-terminus); this interaction is essential for transcription initiation. Post-translationally, phosphorylated by host PRKCA.

It localises to the host nucleus. It is found in the host cytoplasm. The catalysed reaction is RNA(n) + a ribonucleoside 5'-triphosphate = RNA(n+1) + diphosphate. In terms of biological role, RNA-dependent RNA polymerase which is responsible for replication and transcription of virus RNA segments. The transcription of viral mRNAs occurs by a unique mechanism called cap-snatching. 5' methylated caps of cellular mRNAs are cleaved after 10-13 nucleotides by PA. In turn, these short capped RNAs are used as primers by PB1 for transcription of viral mRNAs. During virus replication, PB1 initiates RNA synthesis and copy vRNA into complementary RNA (cRNA) which in turn serves as a template for the production of more vRNAs. This Influenza A virus (strain A/Swine/Colorado/1/1977 H3N2) protein is RNA-directed RNA polymerase catalytic subunit.